The following is a 196-amino-acid chain: Pentatricopeptide repeat-containing protein At1g62350 (196 aa).

PPR repeat units follow at residues aspartate 70–phenylalanine 104 and aspartate 105–proline 139.

Belongs to the PPR family. P subfamily.

In Arabidopsis thaliana (Mouse-ear cress), this protein is Pentatricopeptide repeat-containing protein At1g62350.